Consider the following 392-residue polypeptide: Imidazolonepropionase (392 aa).

Residues H69 and H71 each coordinate Fe(3+). The Zn(2+) site is built by H69 and H71. Positions 78, 136, and 163 each coordinate 4-imidazolone-5-propanoate. Y136 lines the N-formimidoyl-L-glutamate pocket. Residue H226 coordinates Fe(3+). H226 lines the Zn(2+) pocket. 4-imidazolone-5-propanoate is bound at residue Q229. D302 contacts Fe(3+). Residue D302 coordinates Zn(2+). N-formimidoyl-L-glutamate is bound by residues N304 and G306. A 4-imidazolone-5-propanoate-binding site is contributed by S307.

The protein belongs to the metallo-dependent hydrolases superfamily. HutI family. Zn(2+) serves as cofactor. It depends on Fe(3+) as a cofactor.

It localises to the cytoplasm. The catalysed reaction is 4-imidazolone-5-propanoate + H2O = N-formimidoyl-L-glutamate. Its pathway is amino-acid degradation; L-histidine degradation into L-glutamate; N-formimidoyl-L-glutamate from L-histidine: step 3/3. In terms of biological role, catalyzes the hydrolytic cleavage of the carbon-nitrogen bond in imidazolone-5-propanoate to yield N-formimidoyl-L-glutamate. It is the third step in the universal histidine degradation pathway. The chain is Imidazolonepropionase from Salinispora arenicola (strain CNS-205).